The primary structure comprises 52 residues: Histone H2A (52 aa).

The disordered stretch occupies residues 1 to 25 (MSGRGKTGGKARAKAKTRSSRAGLQ). Ser2 carries the N-acetylserine modification. Ser2 is subject to Phosphoserine. Position 6 is an N6-(2-hydroxyisobutyryl)lysine (Lys6). Lys6 carries the N6-acetyllysine modification. Over residues 7 to 19 (TGGKARAKAKTRS) the composition is skewed to basic residues. The residue at position 10 (Lys10) is an N6-(2-hydroxyisobutyryl)lysine; alternate. Position 10 is an N6-lactoyllysine; alternate (Lys10). Lys10 carries the post-translational modification N6-succinyllysine. Residues Lys14 and Lys16 each participate in a glycyl lysine isopeptide (Lys-Gly) (interchain with G-Cter in ubiquitin) cross-link. The residue at position 37 (Lys37) is an N6-(2-hydroxyisobutyryl)lysine; alternate.

In terms of assembly, the nucleosome is a histone octamer containing two molecules each of H2A, H2B, H3 and H4 assembled in one H3-H4 heterotetramer and two H2A-H2B heterodimers. The octamer wraps approximately 147 bp of DNA. In terms of processing, acetylation is not necessary for the antibacterial activity. Monoubiquitination in C-terminus gives a specific tag for epigenetic transcriptional repression. Following DNA double-strand breaks (DSBs), it is ubiquitinated through 'Lys-63' linkage of ubiquitin moieties, leading to the recruitment of repair proteins to sites of DNA damage. H2AK119Ub and ionizing radiation-induced 'Lys-63'-linked ubiquitination are distinct events. Post-translationally, phosphorylation on Ser-2 is enhanced during mitosis. Phosphorylation on Ser-2 directly represses transcription.

The protein resides in the nucleus. Its subcellular location is the chromosome. It is found in the secreted. Functionally, core component of nucleosome. Nucleosomes wrap and compact DNA into chromatin, limiting DNA accessibility to the cellular machineries which require DNA as a template. Histones thereby play a central role in transcription regulation, DNA repair, DNA replication and chromosomal stability. DNA accessibility is regulated via a complex set of post-translational modifications of histones, also called histone code, and nucleosome remodeling. Hipposin shows strong antimicrobial activity against several Gram-positive and Gram-negative bacteria. The sequence is that of Histone H2A from Hippoglossus hippoglossus (Atlantic halibut).